The following is a 125-amino-acid chain: MTDRANSRDKGRQAEEMACAHLLRQGLATLGKNWTCRRGELDLVMLDGDTVVFVEVRSRRHRAWGGALESIDARKRQRLILSAELFLQQEARWAKRPCRFDVVTVDTSDGQSPPRLDWIQNAFDA.

This sequence belongs to the UPF0102 family.

This is UPF0102 protein PSPA7_4996 from Pseudomonas paraeruginosa (strain DSM 24068 / PA7) (Pseudomonas aeruginosa (strain PA7)).